We begin with the raw amino-acid sequence, 328 residues long: Lipoate--protein ligase 1 (328 aa).

Residues 27–214 (PAEESYFLFY…TIFGETEVEE (188 aa)) form the BPL/LPL catalytic domain. Residues Arg69, 74-77 (GAVY), and Lys131 each bind ATP. Lys131 is a (R)-lipoate binding site.

It carries out the reaction L-lysyl-[lipoyl-carrier protein] + (R)-lipoate + ATP = N(6)-[(R)-lipoyl]-L-lysyl-[lipoyl-carrier protein] + AMP + diphosphate + H(+). It participates in protein modification; protein lipoylation via exogenous pathway; protein N(6)-(lipoyl)lysine from lipoate: step 1/2. Its pathway is protein modification; protein lipoylation via exogenous pathway; protein N(6)-(lipoyl)lysine from lipoate: step 2/2. Functionally, catalyzes the lipoylation of proteins, such as GcvH (SAV0833) and GcvH-L (SAV0324), likely via the ATP-dependent activation of lipoate to lipoyl-AMP and the transfer of the activated lipoyl onto the lipoyl domain of the target protein. The chain is Lipoate--protein ligase 1 from Staphylococcus aureus (strain Mu50 / ATCC 700699).